Reading from the N-terminus, the 635-residue chain is Early transcription factor 70 kDa subunit (635 aa).

Residues 32–185 (RSIIDENKSV…SNIISLMSDE (154 aa)) form the Helicase ATP-binding domain. Residue 45–52 (HIMGSGKT) participates in ATP binding. The DEXH box motif lies at 135–138 (DEAH). The Helicase C-terminal domain maps to 326-505 (KFKYFIGKIT…TLPFDIKKLL (180 aa)).

Belongs to the helicase family. VETF subfamily. In terms of assembly, heterodimer of a 70 kDa and a 82 kDa subunit.

The protein resides in the virion. Acts with RNA polymerase to initiate transcription from early gene promoters. A DNA-dependent ATPase activity is associated with VETF. The polypeptide is Early transcription factor 70 kDa subunit (VETFS) (Erythrocebus patas (Red guenon)).